Consider the following 159-residue polypeptide: MSFRIGHGYDVHKFTSAKQNIIIGGVEIAYHLGLEAHSDGDVLIHALCDAIIGALGLGDIGKHFLDTDNQFKNIDSKFFLAEIKKMLDEKQYSISNIDCTIIAQAPKMLPHIEKMRACLANILEIQISQINIKATTTERLGFIGREEGIATHVVCLLYR.

A divalent metal cation contacts are provided by Asp10 and His12. 4-CDP-2-C-methyl-D-erythritol 2-phosphate-binding positions include 10 to 12 (DVH) and 37 to 38 (HS). His45 provides a ligand contact to a divalent metal cation. 4-CDP-2-C-methyl-D-erythritol 2-phosphate contacts are provided by residues 59-61 (DIG), 64-68 (FLDTD), 103-109 (AQAPKML), 135-138 (TTTE), Phe142, and Arg145.

The protein belongs to the IspF family. In terms of assembly, homotrimer. A divalent metal cation is required as a cofactor.

The enzyme catalyses 4-CDP-2-C-methyl-D-erythritol 2-phosphate = 2-C-methyl-D-erythritol 2,4-cyclic diphosphate + CMP. Its pathway is isoprenoid biosynthesis; isopentenyl diphosphate biosynthesis via DXP pathway; isopentenyl diphosphate from 1-deoxy-D-xylulose 5-phosphate: step 4/6. In terms of biological role, involved in the biosynthesis of isopentenyl diphosphate (IPP) and dimethylallyl diphosphate (DMAPP), two major building blocks of isoprenoid compounds. Catalyzes the conversion of 4-diphosphocytidyl-2-C-methyl-D-erythritol 2-phosphate (CDP-ME2P) to 2-C-methyl-D-erythritol 2,4-cyclodiphosphate (ME-CPP) with a corresponding release of cytidine 5-monophosphate (CMP). This is 2-C-methyl-D-erythritol 2,4-cyclodiphosphate synthase from Francisella tularensis subsp. holarctica (strain OSU18).